The chain runs to 65 residues: Weak toxin CM-10 (65 aa).

Disulfide bonds link C3-C24, C6-C11, C17-C42, C46-C57, and C58-C63.

This sequence belongs to the three-finger toxin family. Ancestral subfamily. Orphan group II sub-subfamily. As to expression, expressed by the venom gland.

The protein localises to the secreted. Its function is as follows. Binds with low affinity to muscular (alpha-1-beta-1-delta-epsilon/CHRNA1-CHRNB1-CHRND-CHRNE) and very low affinity to neuronal (alpha-7/CHRNA7) nicotinic acetylcholine receptor (nAChR). The chain is Weak toxin CM-10 from Naja nivea (Cape cobra).